The following is a 511-amino-acid chain: Bifunctional purine biosynthesis protein PurH (511 aa).

The region spanning 1–145 (MKKRALVSVS…KNHKFVSVIV (145 aa)) is the MGS-like domain.

This sequence belongs to the PurH family.

It catalyses the reaction (6R)-10-formyltetrahydrofolate + 5-amino-1-(5-phospho-beta-D-ribosyl)imidazole-4-carboxamide = 5-formamido-1-(5-phospho-D-ribosyl)imidazole-4-carboxamide + (6S)-5,6,7,8-tetrahydrofolate. It carries out the reaction IMP + H2O = 5-formamido-1-(5-phospho-D-ribosyl)imidazole-4-carboxamide. It participates in purine metabolism; IMP biosynthesis via de novo pathway; 5-formamido-1-(5-phospho-D-ribosyl)imidazole-4-carboxamide from 5-amino-1-(5-phospho-D-ribosyl)imidazole-4-carboxamide (10-formyl THF route): step 1/1. Its pathway is purine metabolism; IMP biosynthesis via de novo pathway; IMP from 5-formamido-1-(5-phospho-D-ribosyl)imidazole-4-carboxamide: step 1/1. The sequence is that of Bifunctional purine biosynthesis protein PurH from Bacillus cereus (strain ATCC 10987 / NRS 248).